Here is a 184-residue protein sequence, read N- to C-terminus: UPF0398 protein BC_1561 (184 aa).

This sequence belongs to the UPF0398 family.

This chain is UPF0398 protein BC_1561, found in Bacillus cereus (strain ATCC 14579 / DSM 31 / CCUG 7414 / JCM 2152 / NBRC 15305 / NCIMB 9373 / NCTC 2599 / NRRL B-3711).